Consider the following 66-residue polypeptide: Large ribosomal subunit protein uL30 (66 aa).

It belongs to the universal ribosomal protein uL30 family. As to quaternary structure, part of the 50S ribosomal subunit.

The sequence is that of Large ribosomal subunit protein uL30 from Chloroherpeton thalassium (strain ATCC 35110 / GB-78).